The following is a 132-amino-acid chain: Glycine cleavage system H protein (132 aa).

In terms of domain architecture, Lipoyl-binding spans 24 to 106 (IATIGLSAHA…YEEGWFIKVR (83 aa)). Position 65 is an N6-lipoyllysine (lysine 65).

This sequence belongs to the GcvH family. In terms of assembly, the glycine cleavage system is composed of four proteins: P, T, L and H. Requires (R)-lipoate as cofactor.

Its function is as follows. The glycine cleavage system catalyzes the degradation of glycine. The H protein shuttles the methylamine group of glycine from the P protein to the T protein. The chain is Glycine cleavage system H protein from Picosynechococcus sp. (strain ATCC 27264 / PCC 7002 / PR-6) (Agmenellum quadruplicatum).